We begin with the raw amino-acid sequence, 185 residues long: Ribosome-recycling factor (185 aa).

This sequence belongs to the RRF family.

It is found in the cytoplasm. Responsible for the release of ribosomes from messenger RNA at the termination of protein biosynthesis. May increase the efficiency of translation by recycling ribosomes from one round of translation to another. This is Ribosome-recycling factor from Aeromonas hydrophila subsp. hydrophila (strain ATCC 7966 / DSM 30187 / BCRC 13018 / CCUG 14551 / JCM 1027 / KCTC 2358 / NCIMB 9240 / NCTC 8049).